Reading from the N-terminus, the 445-residue chain is Phosphoglucosamine mutase (445 aa).

Ser100 (phosphoserine intermediate) is an active-site residue. Residues Ser100, Asp240, Asp242, and Asp244 each coordinate Mg(2+). Ser100 is modified (phosphoserine).

Belongs to the phosphohexose mutase family. Requires Mg(2+) as cofactor. Activated by phosphorylation.

It catalyses the reaction alpha-D-glucosamine 1-phosphate = D-glucosamine 6-phosphate. In terms of biological role, catalyzes the conversion of glucosamine-6-phosphate to glucosamine-1-phosphate. The polypeptide is Phosphoglucosamine mutase (Pelotomaculum thermopropionicum (strain DSM 13744 / JCM 10971 / SI)).